Reading from the N-terminus, the 876-residue chain is Alanine--tRNA ligase (876 aa).

At K74 the chain carries N6-acetyllysine. Residues H564, H568, C666, and H670 each contribute to the Zn(2+) site.

The protein belongs to the class-II aminoacyl-tRNA synthetase family. In terms of assembly, homotetramer. Requires Zn(2+) as cofactor.

It localises to the cytoplasm. It catalyses the reaction tRNA(Ala) + L-alanine + ATP = L-alanyl-tRNA(Ala) + AMP + diphosphate. Its function is as follows. Catalyzes the attachment of alanine to tRNA(Ala) in a two-step reaction: alanine is first activated by ATP to form Ala-AMP and then transferred to the acceptor end of tRNA(Ala). Also edits incorrectly charged Ser-tRNA(Ala) and Gly-tRNA(Ala) via its editing domain. The polypeptide is Alanine--tRNA ligase (Escherichia coli O6:K15:H31 (strain 536 / UPEC)).